Consider the following 192-residue polypeptide: Epoxyqueuosine reductase QueH (192 aa).

[4Fe-4S] cluster-binding residues include Cys-9, Cys-10, Cys-87, and Cys-90. A disulfide bridge connects residues Cys-169 and Cys-171.

This sequence belongs to the QueH family.

It carries out the reaction epoxyqueuosine(34) in tRNA + AH2 = queuosine(34) in tRNA + A + H2O. Its pathway is tRNA modification; tRNA-queuosine biosynthesis. Catalyzes the conversion of epoxyqueuosine (oQ) to queuosine (Q), which is a hypermodified base found in the wobble positions of tRNA(Asp), tRNA(Asn), tRNA(His) and tRNA(Tyr). This is Epoxyqueuosine reductase QueH from Thermotoga maritima (strain ATCC 43589 / DSM 3109 / JCM 10099 / NBRC 100826 / MSB8).